A 586-amino-acid chain; its full sequence is Pyruvate kinase (586 aa).

Arg32 is a substrate binding site. Residues Asn34, Ser36, Asp66, and Thr67 each contribute to the K(+) site. 34–37 (NFSH) contacts ATP. Residues Arg73 and Lys156 each coordinate ATP. Glu222 is a Mg(2+) binding site. 3 residues coordinate substrate: Gly245, Asp246, and Thr278. Asp246 serves as a coordination point for Mg(2+).

The protein belongs to the pyruvate kinase family. This sequence in the C-terminal section; belongs to the PEP-utilizing enzyme family. Mg(2+) serves as cofactor. It depends on K(+) as a cofactor.

The catalysed reaction is pyruvate + ATP = phosphoenolpyruvate + ADP + H(+). The protein operates within carbohydrate degradation; glycolysis; pyruvate from D-glyceraldehyde 3-phosphate: step 5/5. The protein is Pyruvate kinase (pyk) of Staphylococcus haemolyticus (strain JCSC1435).